Reading from the N-terminus, the 160-residue chain is Small ribosomal subunit protein uS9 (160 aa).

Polar residues predominate over residues 1–18 (MTDTSNSLQDLGTLTGAP). The interval 1 to 37 (MTDTSNSLQDLGTLTGAPSAQPVKSVEPKIDAQGRAY) is disordered.

The protein belongs to the universal ribosomal protein uS9 family.

The protein is Small ribosomal subunit protein uS9 of Hyphomonas neptunium (strain ATCC 15444).